The primary structure comprises 228 residues: Ribosomal RNA small subunit methyltransferase G (228 aa).

Residues Gly92, Phe97, 115 to 117 (EAT), 143 to 144 (AE), and Arg156 each bind S-adenosyl-L-methionine.

It belongs to the methyltransferase superfamily. RNA methyltransferase RsmG family.

Its subcellular location is the cytoplasm. Functionally, specifically methylates the N7 position of a guanine in 16S rRNA. This chain is Ribosomal RNA small subunit methyltransferase G, found in Thermosynechococcus vestitus (strain NIES-2133 / IAM M-273 / BP-1).